The following is a 333-amino-acid chain: Squamosa promoter-binding-like protein 8 (333 aa).

The segment at 1–28 is disordered; it reads MLDYEWDNPSSIVLSGDERNPDSDPTRS. Over residues 16–25 the composition is skewed to basic and acidic residues; the sequence is GDERNPDSDP. The sufficient and necessary for DNA binding stretch occupies residues 179–269; it reads MANSLSTPRC…RKCHQSASAT (91 aa). Residues 185–262 form an SBP-type zinc finger; the sequence is TPRCQAEGCN…ADHNRRRRKC (78 aa). Zn(2+) is bound by residues cysteine 188, cysteine 193, cysteine 210, histidine 213, cysteine 229, cysteine 232, histidine 236, and cysteine 248. The Bipartite nuclear localization signal signature appears at 245–261; sequence KRSCRKRLADHNRRRRK. Disordered stretches follow at residues 254–303 and 314–333; these read DHNR…TISL and TASSSTSASSSSNSMFFSSG. The segment covering 264–284 has biased composition (polar residues); it reads QSASATQDTGTGKTTPKSPND. Positions 289-299 are enriched in low complexity; sequence ASSSPSSNAPP.

The cofactor is Zn(2+). In terms of tissue distribution, expressed in shoot apical region and early floral tissues. Transcripts levels increase in developing pollen sacs, and decrease in later stage of anther development. Strongly expressed in the placental region of the carpels.

It localises to the nucleus. It is found in the cytoplasm. Trans-acting factor that binds specifically to the consensus nucleotide sequence 5'-TNCGTACAA-3'. Binds specifically to the 5'-GTAC-3' core sequence. Involved in development and floral organogenesis. Required for ovule differentiation, pollen production, filament elongation, seed formation and siliques elongation. Also seems to play a role in the formation of trichomes on sepals. May positively modulate gibberellin (GA) signaling in flower. This is Squamosa promoter-binding-like protein 8 (SPL8) from Arabidopsis thaliana (Mouse-ear cress).